The chain runs to 459 residues: Spermatogenesis-associated protein 1 (459 aa).

Positions 193-205 are enriched in basic and acidic residues; sequence LKELPNKNQEEAG. Residues 193-213 form a disordered region; the sequence is LKELPNKNQEEAGGKATAEKS. Coiled coils occupy residues 287–374 and 400–453; these read TDIS…YKKL and LIIQ…KKII.

Interacts with IFT20.

It is found in the cytoplasmic vesicle. The protein resides in the secretory vesicle. The protein localises to the acrosome. The chain is Spermatogenesis-associated protein 1 (SPATA1) from Homo sapiens (Human).